Consider the following 341-residue polypeptide: Methionine import ATP-binding protein MetN 2 (341 aa).

The region spanning 2 to 241 (IELKEVVKEY…PQHAVTKRFV (240 aa)) is the ABC transporter domain. 38–45 (GFSGAGKS) serves as a coordination point for ATP.

The protein belongs to the ABC transporter superfamily. Methionine importer (TC 3.A.1.24) family. The complex is composed of two ATP-binding proteins (MetN), two transmembrane proteins (MetI) and a solute-binding protein (MetQ).

It is found in the cell membrane. The enzyme catalyses L-methionine(out) + ATP + H2O = L-methionine(in) + ADP + phosphate + H(+). It carries out the reaction D-methionine(out) + ATP + H2O = D-methionine(in) + ADP + phosphate + H(+). In terms of biological role, part of the ABC transporter complex MetNIQ involved in methionine import. Responsible for energy coupling to the transport system. The polypeptide is Methionine import ATP-binding protein MetN 2 (Staphylococcus aureus (strain MRSA252)).